We begin with the raw amino-acid sequence, 392 residues long: Alkaline phosphatase L (392 aa).

The first 23 residues, 1-23 (MYKRSLIAASLSVAALVSAQAMA), serve as a signal peptide directing secretion.

This sequence belongs to the PstS family. Homodimer.

It is found in the secreted. It localises to the periplasm. The enzyme catalyses a phosphate monoester + H2O = an alcohol + phosphate. Functionally, has both a phosphomonoesterase and phosphodiesterase activity. In Pseudomonas aeruginosa (strain UCBPP-PA14), this protein is Alkaline phosphatase L.